A 253-amino-acid chain; its full sequence is Kallikrein-7 (253 aa).

Positions 1-22 are cleaved as a signal peptide; that stretch reads MARSLLLPLQILLLSLALETAG. The propeptide at 23–29 is activation peptide; sequence EEAQGDK. Positions 30-250 constitute a Peptidase S1 domain; it reads IIDGAPCARG…FTKWINDTMK (221 aa). 6 disulfide bridges follow: Cys36/Cys165, Cys55/Cys71, Cys137/Cys239, Cys144/Cys211, Cys176/Cys190, and Cys201/Cys226. Catalysis depends on charge relay system residues His70 and Asp112. Catalysis depends on Ser205, which acts as the Charge relay system. The N-linked (GlcNAc...) asparagine glycan is linked to Asn246.

Belongs to the peptidase S1 family. Kallikrein subfamily. As to expression, abundantly expressed in the skin and is expressed by keratinocytes in the epidermis. Also expressed in the brain, mammary gland, cerebellum, spinal cord and kidney. Lower levels in salivary glands, uterus, thymus, thyroid, placenta, trachea and testis. Up-regulated in ovarian carcinoma, especially late-stage serous carcinoma, compared with normal ovaries and benign adenomas (at protein level).

It is found in the secreted. The catalysed reaction is Cleavage of proteins with aromatic side chains in the P1 position.. Its activity is regulated as follows. Inhibited by Zn2+ and Cu2+ at low micromolar concentrations. Inhibited by SERPINA12. Its function is as follows. May catalyze the degradation of intercellular cohesive structures in the cornified layer of the skin in the continuous shedding of cells from the skin surface. Specific for amino acid residues with aromatic side chains in the P1 position. Cleaves insulin A chain at '14-Tyr-|-Gln-15' and insulin B chain at '6-Leu-|-Cys-7', '16-Tyr-|-Leu-17', '25-Phe-|-Tyr-26' and '26-Tyr-|-Thr-27'. Could play a role in the activation of precursors to inflammatory cytokines. The protein is Kallikrein-7 (KLK7) of Homo sapiens (Human).